Reading from the N-terminus, the 291-residue chain is Glycine--tRNA ligase alpha subunit (291 aa).

It belongs to the class-II aminoacyl-tRNA synthetase family. Tetramer of two alpha and two beta subunits.

It localises to the cytoplasm. It carries out the reaction tRNA(Gly) + glycine + ATP = glycyl-tRNA(Gly) + AMP + diphosphate. This chain is Glycine--tRNA ligase alpha subunit, found in Nitratidesulfovibrio vulgaris (strain DSM 19637 / Miyazaki F) (Desulfovibrio vulgaris).